The sequence spans 674 residues: ATP-dependent DNA helicase Hel308 (674 aa).

Residues Q27 and 44 to 51 (VPTAAGKT) each bind ATP. The Helicase ATP-binding domain maps to 31 to 197 (IEQIRKGRNV…WLDASLIKSD (167 aa)). Positions 142 to 145 (DEIH) match the DEAH box motif. A Helicase C-terminal domain is found at 224 to 411 (SINQIIRETV…EAKVRFNTLA (188 aa)).

It belongs to the helicase family. Hel308 subfamily. As to quaternary structure, monomer.

The catalysed reaction is Couples ATP hydrolysis with the unwinding of duplex DNA by translocating in the 3'-5' direction.. The enzyme catalyses ATP + H2O = ADP + phosphate + H(+). DNA-dependent ATPase and 3'-5' DNA helicase that may be involved in repair of stalled replication forks. The chain is ATP-dependent DNA helicase Hel308 from Thermoplasma acidophilum (strain ATCC 25905 / DSM 1728 / JCM 9062 / NBRC 15155 / AMRC-C165).